We begin with the raw amino-acid sequence, 350 residues long: Olfactory receptor 52I2 (350 aa).

Over 1 to 55 (MCQQILRDCILLIHHLCINRKKVSLVMLGPAYNHTMETPASFLLVGIPGLQSSHL) the chain is Extracellular. An N-linked (GlcNAc...) asparagine glycan is attached at Asn-33. Residues 56–76 (WLAISLSAMYIIALLGNTIIV) form a helical membrane-spanning segment. Topologically, residues 77–84 (TAIWMDST) are cytoplasmic. Residues 85–105 (RHEPMYCFLCVLAAVDIVMAS) form a helical membrane-spanning segment. Over 106–129 (SVVPKMVSIFCSGDSSISFSACFT) the chain is Extracellular. Cysteines 127 and 219 form a disulfide. A helical membrane pass occupies residues 130 to 150 (QMFFVHLATAVETGLLLTMAF). The Cytoplasmic portion of the chain corresponds to 151 to 169 (DRYVAICKPLHYKRILTPQ). The chain crosses the membrane as a helical span at residues 170-190 (VMLGMSMAITIRAIIAITPLS). Topologically, residues 191–226 (WMVSHLPFCGSNVVVHSYCEHIALARLACADPVPSS) are extracellular. Residues 227–247 (LYSLIGSSLMVGSDVAFIAAS) traverse the membrane as a helical segment. Residues 248–267 (YILILKAVFGLSSKTAQLKA) lie on the Cytoplasmic side of the membrane. A helical membrane pass occupies residues 268-288 (LSTCGSHVGVMALYYLPGMAS). The Extracellular portion of the chain corresponds to 289-304 (IYAAWLGQDVVPLHTQ). The helical transmembrane segment at 305–325 (VLLADLYVIIPATLNPIIYGM) threads the bilayer. The Cytoplasmic segment spans residues 326–350 (RTKQLRERIWSYLMHVLFDHSNLGS).

It belongs to the G-protein coupled receptor 1 family.

It is found in the cell membrane. Odorant receptor. In Homo sapiens (Human), this protein is Olfactory receptor 52I2 (OR52I2).